A 345-amino-acid chain; its full sequence is Anthranilate phosphoribosyltransferase (345 aa).

5-phospho-alpha-D-ribose 1-diphosphate-binding positions include Gly-84, 87–88, Thr-92, 94–97, 112–120, and Ser-124; these read GD, NIST, and KHGNRSVSS. An anthranilate-binding site is contributed by Gly-84. Mg(2+) is bound at residue Ser-96. Asn-115 serves as a coordination point for anthranilate. Residue Arg-170 participates in anthranilate binding. Asp-229 and Glu-230 together coordinate Mg(2+).

Belongs to the anthranilate phosphoribosyltransferase family. Homodimer. It depends on Mg(2+) as a cofactor.

It carries out the reaction N-(5-phospho-beta-D-ribosyl)anthranilate + diphosphate = 5-phospho-alpha-D-ribose 1-diphosphate + anthranilate. The protein operates within amino-acid biosynthesis; L-tryptophan biosynthesis; L-tryptophan from chorismate: step 2/5. Its function is as follows. Catalyzes the transfer of the phosphoribosyl group of 5-phosphorylribose-1-pyrophosphate (PRPP) to anthranilate to yield N-(5'-phosphoribosyl)-anthranilate (PRA). This Xanthomonas euvesicatoria pv. vesicatoria (strain 85-10) (Xanthomonas campestris pv. vesicatoria) protein is Anthranilate phosphoribosyltransferase.